A 441-amino-acid chain; its full sequence is FBD-associated F-box protein At5g18780 (441 aa).

The F-box domain maps to 10–56; the sequence is EDRISILPEPLLCHILSFLRTKDSVRTSVLSSRWRDLWLWVPRLDLD. In terms of domain architecture, FBD spans 366–410; the sequence is LPRCLISSLASVDIESPITDKATELKLVSYLLENSTTLKKLVLRL.

In Arabidopsis thaliana (Mouse-ear cress), this protein is FBD-associated F-box protein At5g18780.